The primary structure comprises 101 residues: Small ribosomal subunit protein uS14 (101 aa).

The span at Met-1–Asn-10 shows a compositional bias: basic and acidic residues. The interval Met-1 to Lys-23 is disordered. Basic residues predominate over residues Asn-11–Lys-23.

This sequence belongs to the universal ribosomal protein uS14 family. In terms of assembly, part of the 30S ribosomal subunit. Contacts proteins S3 and S10.

Binds 16S rRNA, required for the assembly of 30S particles and may also be responsible for determining the conformation of the 16S rRNA at the A site. The polypeptide is Small ribosomal subunit protein uS14 (Rhodopseudomonas palustris (strain TIE-1)).